Consider the following 256-residue polypeptide: Thiazole synthase (256 aa).

Catalysis depends on K97, which acts as the Schiff-base intermediate with DXP. 1-deoxy-D-xylulose 5-phosphate is bound by residues G158, 184–185 (AG), and 206–207 (NT).

This sequence belongs to the ThiG family. Homotetramer. Forms heterodimers with either ThiH or ThiS.

The protein resides in the cytoplasm. It carries out the reaction [ThiS sulfur-carrier protein]-C-terminal-Gly-aminoethanethioate + 2-iminoacetate + 1-deoxy-D-xylulose 5-phosphate = [ThiS sulfur-carrier protein]-C-terminal Gly-Gly + 2-[(2R,5Z)-2-carboxy-4-methylthiazol-5(2H)-ylidene]ethyl phosphate + 2 H2O + H(+). Its pathway is cofactor biosynthesis; thiamine diphosphate biosynthesis. Functionally, catalyzes the rearrangement of 1-deoxy-D-xylulose 5-phosphate (DXP) to produce the thiazole phosphate moiety of thiamine. Sulfur is provided by the thiocarboxylate moiety of the carrier protein ThiS. In vitro, sulfur can be provided by H(2)S. This chain is Thiazole synthase, found in Pelotomaculum thermopropionicum (strain DSM 13744 / JCM 10971 / SI).